Here is a 409-residue protein sequence, read N- to C-terminus: O-glucosyltransferase rumi (409 aa).

An N-terminal signal peptide occupies residues 1-20; the sequence is MLINVVLIILLVGLNGKASG. Intrachain disulfides connect Cys62–Cys73, Cys71–Cys376, Cys118–Cys124, and Cys280–Cys303. The Proton donor/acceptor role is filled by Asp149. Residues 190–195 form an interaction with the consensus sequence C-X-S-X-[PA]-C in peptide substrates region; sequence ATKLHP. Residues 227–231, Arg235, 274–276, and 292–296 each bind UDP-alpha-D-glucose; these read RGSRT, VSF, and AASFR. A Prevents secretion from ER motif is present at residues 406 to 409; that stretch reads KDEL.

This sequence belongs to the glycosyltransferase 90 family.

The protein resides in the endoplasmic reticulum lumen. It functions in the pathway protein modification; protein glycosylation. In terms of biological role, protein O-glucosyltransferase. Catalyzes the reaction that attaches glucose through an O-glycosidic linkage to a conserved serine residue found in the consensus sequence C-X-S-X-[PA]-C in epidermal growth factor-like repeats. Regulates Notch signaling by glucosylating Notch in the ER, glucosylation is required for the correct folding and cleavage of Notch. The chain is O-glucosyltransferase rumi from Drosophila pseudoobscura pseudoobscura (Fruit fly).